The following is a 301-amino-acid chain: E3 ubiquitin-protein ligase RNF144B (301 aa).

The segment at 26–242 (PLVTCKLCLC…YDKGPCRNKL (217 aa)) is TRIAD supradomain. Zn(2+) is bound by residues Cys-30, Cys-33, Cys-53, Cys-56, Cys-121, Cys-126, Cys-145, Cys-148, Cys-153, Cys-156, His-161, Cys-166, Cys-191, and Cys-194. The RING-type 1 zinc finger occupies 30-80 (CKLCLCEQSLDKMTMLQECQCIFCTPCLKQYMVLSIREGCGSPITCPDMVC). An IBR-type zinc finger spans residues 101 to 166 (QLYQRLKFER…KDAWHEESSC (66 aa)). The RING-type 2; atypical zinc-finger motif lies at 191–220 (CPVCRIYIERNEGCAQMMCKNCKHTFCWYC). Cys-204 is an active-site residue. Zn(2+) is bound by residues Cys-209, Cys-212, Cys-217, Cys-220, His-232, and Cys-238. Residues 256-276 (VVGILVGLGVIALVTSPLLLL) form a helical membrane-spanning segment.

This sequence belongs to the RBR family. RNF144 subfamily. Interacts with UBE2L3, UBE2L6 and LCMT2, as well as with BAX. Interacts with TBK1; this interaction inhibits TBK1 phosphorylation and 'Lys-63'-linked polyubiquitination. In terms of processing, auto-ubiquitinated.

The protein localises to the mitochondrion membrane. The protein resides in the cytoplasm. It carries out the reaction [E2 ubiquitin-conjugating enzyme]-S-ubiquitinyl-L-cysteine + [acceptor protein]-L-lysine = [E2 ubiquitin-conjugating enzyme]-L-cysteine + [acceptor protein]-N(6)-ubiquitinyl-L-lysine.. It participates in protein modification; protein ubiquitination. Its function is as follows. E3 ubiquitin-protein ligase which accepts ubiquitin from E2 ubiquitin-conjugating enzymes UBE2L3 and UBE2L6 in the form of a thioester and then directly transfers the ubiquitin to targeted substrates such as LCMT2, thereby promoting their degradation. Induces apoptosis via a p53/TP53-dependent but caspase-independent mechanism. Plays a crucial role in maintaining the genomic stability by controlling the degradation of multiple proteins involved in mitotic progression and DNA damage. Regulates epithelial homeostasis by mediating degradation of CDKN1A and isoform 2 of TP63. Plays a regulatory role in innate immunity by negatively regulating IRF3 activation and IFN-beta production. Mechanistically, inhibits TBK1 phosphorylation and 'Lys-63'-linked polyubiquitination independently of its E3 ligase activity. Alternatively, promotes 'Lys-27' and 'Lys-33'-linked ubiquitination of IFIH1/MDA5, promoting selective autophagic degradation of IFIH1/MDA5 to inhibit antiviral response. This Mus musculus (Mouse) protein is E3 ubiquitin-protein ligase RNF144B (Rnf144b).